The primary structure comprises 342 residues: Ribosomal RNA small subunit methyltransferase C (342 aa).

This sequence belongs to the methyltransferase superfamily. RsmC family. In terms of assembly, monomer.

It is found in the cytoplasm. It carries out the reaction guanosine(1207) in 16S rRNA + S-adenosyl-L-methionine = N(2)-methylguanosine(1207) in 16S rRNA + S-adenosyl-L-homocysteine + H(+). In terms of biological role, specifically methylates the guanine in position 1207 of 16S rRNA in the 30S particle. The sequence is that of Ribosomal RNA small subunit methyltransferase C from Cronobacter sakazakii (strain ATCC BAA-894) (Enterobacter sakazakii).